A 179-amino-acid chain; its full sequence is Large ribosomal subunit protein uL5 (179 aa).

It belongs to the universal ribosomal protein uL5 family. Part of the 50S ribosomal subunit; part of the 5S rRNA/L5/L18/L25 subcomplex. Contacts the 5S rRNA and the P site tRNA. Forms a bridge to the 30S subunit in the 70S ribosome.

This is one of the proteins that bind and probably mediate the attachment of the 5S RNA into the large ribosomal subunit, where it forms part of the central protuberance. In the 70S ribosome it contacts protein S13 of the 30S subunit (bridge B1b), connecting the 2 subunits; this bridge is implicated in subunit movement. Contacts the P site tRNA; the 5S rRNA and some of its associated proteins might help stabilize positioning of ribosome-bound tRNAs. This is Large ribosomal subunit protein uL5 from Rhodospirillum rubrum (strain ATCC 11170 / ATH 1.1.1 / DSM 467 / LMG 4362 / NCIMB 8255 / S1).